Reading from the N-terminus, the 114-residue chain is MNSYLLLLMVSLLTCIGQLCQKQAAQCWEQPQARRLNLTLRWLAIAVVSLGLGMLLWLRLLQQLPLSVAYPMLSFNFVLVTLAAQLFYGEKATLRHWLGVAAIMFGILLMSWHL.

The next 3 helical transmembrane spans lie at leucine 38–leucine 58, leucine 64–alanine 84, and leucine 94–leucine 114. One can recognise an EamA domain in the interval leucine 43–tryptophan 112.

Belongs to the ArnE family. As to quaternary structure, heterodimer of ArnE and ArnF.

The protein resides in the cell inner membrane. The protein operates within bacterial outer membrane biogenesis; lipopolysaccharide biosynthesis. Translocates 4-amino-4-deoxy-L-arabinose-phosphoundecaprenol (alpha-L-Ara4N-phosphoundecaprenol) from the cytoplasmic to the periplasmic side of the inner membrane. The protein is Probable 4-amino-4-deoxy-L-arabinose-phosphoundecaprenol flippase subunit ArnE of Yersinia pestis bv. Antiqua (strain Antiqua).